Consider the following 79-residue polypeptide: Acyl carrier protein (79 aa).

In terms of domain architecture, Carrier spans 2–77; that stretch reads SDIEQRVKKI…QAIDYAKAHV (76 aa). Ser37 is modified (O-(pantetheine 4'-phosphoryl)serine).

This sequence belongs to the acyl carrier protein (ACP) family. In terms of processing, 4'-phosphopantetheine is transferred from CoA to a specific serine of apo-ACP by AcpS. This modification is essential for activity because fatty acids are bound in thioester linkage to the sulfhydryl of the prosthetic group.

It localises to the cytoplasm. The protein operates within lipid metabolism; fatty acid biosynthesis. Its function is as follows. Carrier of the growing fatty acid chain in fatty acid biosynthesis. The polypeptide is Acyl carrier protein (Janthinobacterium sp. (strain Marseille) (Minibacterium massiliensis)).